The chain runs to 309 residues: Taste receptor type 2 member 113 (309 aa).

Topologically, residues 1 to 10 (MVAVLQSTLP) are extracellular. Residues 11-31 (IIFSMEFIMGTLGNGFIFLIV) form a helical membrane-spanning segment. Residues 32 to 55 (CIDWVQRRKISLVDQIRTALAISR) are Cytoplasmic-facing. The chain crosses the membrane as a helical span at residues 56–76 (IALIWLIFLDWWVSVHYPALH). The Extracellular portion of the chain corresponds to 77-80 (ETGK). A helical transmembrane segment spans residues 81-101 (MLSTYLISWTVINHCNFWLTA). The Cytoplasmic segment spans residues 102–127 (NLSILYFLKIANFSNIIFLYLKFRSK). A helical membrane pass occupies residues 128–148 (NVVLVTLLVSLFFLFLNTVII). At 149–185 (KIFSDVCFDSVQRNVSQIFIMYNHEQICKFLSFTNPM) the chain is on the extracellular side. Asn-162 carries N-linked (GlcNAc...) asparagine glycosylation. A helical transmembrane segment spans residues 186–206 (FTFIPFVMSTVMFSLLIFSLW). Over 207 to 229 (RHLKNMQHTAKGCRDISTTVHIR) the chain is Cytoplasmic. Residues 230 to 250 (ALQTIIVSVVLYTIFFLSFFV) form a helical membrane-spanning segment. Residues 251 to 262 (KVWSFVSPERYL) are Extracellular-facing. Residues 263–283 (IFLFVWALGNAVFSAHPFVMI) traverse the membrane as a helical segment. Topologically, residues 284-309 (LVNRRLRLASLSLIFWLWYRFKNIEV) are cytoplasmic.

It belongs to the G-protein coupled receptor T2R family.

It is found in the membrane. Putative taste receptor which may play a role in the perception of bitterness. This Mus musculus (Mouse) protein is Taste receptor type 2 member 113.